The chain runs to 159 residues: Trafficking protein particle complex subunit 6A (159 aa).

Ser33 is subject to Phosphoserine.

It belongs to the TRAPP small subunits family. BET3 subfamily. In terms of assembly, part of the multisubunit transport protein particle (TRAPP) complex. Heterodimer with TRAPPC3. The heterodimer TRAPPC3-TRAPPC6A interacts with TRAPPC2L. Interacts with TRAPPC2L. Ubiquitous, with lowest expression in skeletal muscle and brain and highest in kidney, liver and testis, as well as in cultured melanocytes.

It localises to the golgi apparatus. The protein localises to the cis-Golgi network. Its subcellular location is the endoplasmic reticulum. May play a role in vesicular transport during the biogenesis of melanosomes. This is Trafficking protein particle complex subunit 6A from Mus musculus (Mouse).